The chain runs to 34 residues: Photosystem II reaction center protein Psb30 (34 aa).

Residues 6 to 26 (VIGQLVSTGLIGLLGPAVIIL) traverse the membrane as a helical segment.

Belongs to the Psb30/Ycf12 family. In terms of assembly, PSII is composed of 1 copy each of membrane proteins PsbA, PsbB, PsbC, PsbD, PsbE, PsbF, PsbH, PsbI, PsbJ, PsbK, PsbL, PsbM, PsbT, PsbX, PsbY, PsbZ, Psb30/Ycf12, peripheral proteins of the oxygen-evolving complex and a large number of cofactors. It forms dimeric complexes.

The protein resides in the plastid. The protein localises to the chloroplast thylakoid membrane. A core subunit of photosystem II (PSII), probably helps stabilize the reaction center. The protein is Photosystem II reaction center protein Psb30 of Skeletonema costatum (Marine centric diatom).